The sequence spans 535 residues: Potassium channel subfamily K member 10 (535 aa).

The Cytoplasmic segment spans residues 1-68 (MYFSYIGYFF…GLQTVMKWKT (68 aa)). Residues 69–89 (VVAIFVVVVVYLVTGGLVFRA) traverse the membrane as a helical segment. Positions 151–177 (LGSAFFFAGTVITTIGYGNIAPSTEGG) form an intramembrane region, pore-forming. K(+) contacts are provided by Thr-164, Ile-165, Gly-166, and Tyr-167. The segment at 164–169 (TIGYGN) is selectivity filter 1. A helical membrane pass occupies residues 179-199 (IFCILYAIFGIPLFGFLLAGI). The Cytoplasmic segment spans residues 200-230 (GDQLGTIFGKSIARVEKVFRKKQVSQTKIRV). The chain crosses the membrane as a helical span at residues 231-251 (ISTILFILAGCIVFVTIPAVI). Positions 260-291 (ALESIYFVVVTLTTVGFGDFVAGGNAGINYRE) form an intramembrane region, pore-forming. Residues Thr-273, Val-274, Gly-275, and Phe-276 each contribute to the K(+) site. Positions 273-278 (TVGFGD) are selectivity filter 2. Residues 296–316 (LVWFWILVGLAYFAAVLSMIG) form a helical membrane-spanning segment. Residues 317–535 (DWLRVLSKKT…ENNSLLEDRN (219 aa)) are Cytoplasmic-facing. 2 disordered regions span residues 410-438 (QESI…ASED) and 510-535 (EMEN…EDRN). A compositionally biased stretch (polar residues) spans 525-535 (LENNSLLEDRN).

Homodimer; disulfide-linked. Forms heterodimers with other 2-pore domain K(+) channel subunits, such as KCNK2, KCNK4 and KCNK18. As to expression, detected in dorsal root ganglia (DRG) neurons (at protein level).

Its subcellular location is the cell membrane. The catalysed reaction is K(+)(in) = K(+)(out). It catalyses the reaction Rb(+)(in) = Rb(+)(out). It carries out the reaction Cs(+)(in) = Cs(+)(out). Its activity is regulated as follows. Activated by stimuli such as mechanical stretch, acidic pH and polyunsaturated free fatty acids. Activated by a dihydroacridine analog, ML67-33. Inhibited by polycationic dye ruthenium red. Selectively activated by T2A3 (2-[(4-chloro-3-methylphenyl)amino] benzoic acid). Functionally, k(+) channel that conducts voltage-dependent outward rectifying currents upon membrane depolarization. Voltage sensing is coupled to K(+) electrochemical gradient in an 'ion flux gating' mode where outward but not inward ion flow opens the gate. Converts to voltage-independent 'leak' conductance mode upon stimulation by various stimuli including mechanical membrane stretch, acidic pH, heat and lipids. Homo- and heterodimerizes to form functional channels with distinct regulatory and gating properties. In trigeminal ganglia sensory neurons, the heterodimer of KCNK10/TREK-2 and KCNK18/TRESK inhibits neuronal firing and neurogenic inflammation by stabilizing the resting membrane potential at K(+) equilibrium potential as well as by regulating the threshold of action potentials and the spike frequency. Permeable to other monovalent ions such as Rb(+) and Cs(+). In Mus musculus (Mouse), this protein is Potassium channel subfamily K member 10.